Consider the following 383-residue polypeptide: Acyl-CoA dehydrogenase, short-chain specific (383 aa).

Residue E367 is the Proton acceptor of the active site.

The protein belongs to the acyl-CoA dehydrogenase family. In terms of assembly, homotetramer. FAD is required as a cofactor.

It catalyses the reaction butanoyl-CoA + oxidized [electron-transfer flavoprotein] + H(+) = (2E)-butenoyl-CoA + reduced [electron-transfer flavoprotein]. The catalysed reaction is a short-chain 2,3-saturated fatty acyl-CoA + oxidized [electron-transfer flavoprotein] + H(+) = a short-chain (2E)-enoyl-CoA + reduced [electron-transfer flavoprotein]. Its function is as follows. Has an optimum specificity for 4-carbon length fatty acyl-CoAs. The polypeptide is Acyl-CoA dehydrogenase, short-chain specific (Megasphaera elsdenii).